The following is a 252-amino-acid chain: tRNA (guanine-N(1)-)-methyltransferase (252 aa).

S-adenosyl-L-methionine is bound by residues Gly113 and 133–138 (LGDYVL).

The protein belongs to the RNA methyltransferase TrmD family. As to quaternary structure, homodimer.

Its subcellular location is the cytoplasm. The catalysed reaction is guanosine(37) in tRNA + S-adenosyl-L-methionine = N(1)-methylguanosine(37) in tRNA + S-adenosyl-L-homocysteine + H(+). Functionally, specifically methylates guanosine-37 in various tRNAs. This Stenotrophomonas maltophilia (strain K279a) protein is tRNA (guanine-N(1)-)-methyltransferase.